The primary structure comprises 522 residues: Solute carrier family 2, facilitated glucose transporter member 2 (522 aa).

Residues 1–10 are Cytoplasmic-facing; that stretch reads MSEDKITGTL. A helical membrane pass occupies residues 11-31; that stretch reads AFTVFTAVLGSFQFGYDIGVI. Residues 32–96 are Extracellular-facing; sequence NAPQEVIISH…SAHIVTMLWS (65 aa). N-linked (GlcNAc...) asparagine glycosylation occurs at asparagine 62. A helical transmembrane segment spans residues 97 to 117; it reads LSVSSFAVGGMVASFFGGWLG. Residues 118–125 are Cytoplasmic-facing; sequence DKLGRIKA. The chain crosses the membrane as a helical span at residues 126–146; the sequence is MLAANSLSLTGALLMGCSKFG. The Extracellular portion of the chain corresponds to 147–156; sequence PAHALIIAGR. A helical membrane pass occupies residues 157-177; the sequence is SVSGLYCGLISGLVPMYIGEI. Topologically, residues 178–185 are cytoplasmic; it reads APTTLRGA. A helical membrane pass occupies residues 186–206; sequence LGTLHQLALVTGILISQIAGL. Glutamine 191 lines the D-glucose pocket. Residues 207–215 lie on the Extracellular side of the membrane; that stretch reads SFILGNQDY. A helical transmembrane segment spans residues 216 to 236; sequence WHILLGLSAVPALLQCLLLLF. The Cytoplasmic portion of the chain corresponds to 237–301; the sequence is CPESPRYLYL…LFTDPNYRQP (65 aa). A helical membrane pass occupies residues 302-322; that stretch reads IVVALMLHLAQQFSGINGIFY. Residues 312–313 and asparagine 318 contribute to the D-glucose site; that span reads QQ. Residues 323–337 lie on the Extracellular side of the membrane; that stretch reads YSTSIFQTAGISQPV. A helical transmembrane segment spans residues 338-358; that stretch reads YATIGVGAINMIFTAVSVLLV. D-glucose is bound at residue asparagine 347. At 359-365 the chain is on the cytoplasmic side; sequence EKAGRRT. A helical membrane pass occupies residues 366 to 386; sequence LFLAGMIGMFFCAVFMSLGLV. Topologically, residues 387-401 are extracellular; it reads LLDKFTWMSYVSMTA. A helical membrane pass occupies residues 402–422; that stretch reads IFLFVSFFEIGPGPIPWFMVA. The D-glucose site is built by glutamate 410 and tryptophan 418. The Cytoplasmic portion of the chain corresponds to 423 to 431; the sequence is EFFSQGPRP. The chain crosses the membrane as a helical span at residues 432-452; the sequence is TALALAAFSNWVCNFIIALCF. Topologically, residues 453–459 are extracellular; it reads QYIADFL. A helical membrane pass occupies residues 460–480; sequence GPYVFFLFAGVVLVFTLFTFF. At 481–522 the chain is on the cytoplasmic side; the sequence is KVPETKGKSFDEIAAEFRKKSGSAPPRKATVQMEFLGSSETV. Position 521 is a phosphothreonine (threonine 521).

The protein belongs to the major facilitator superfamily. Sugar transporter (TC 2.A.1.1) family. Glucose transporter subfamily. Post-translationally, N-glycosylated; required for stability and retention at the cell surface of pancreatic beta cells. In terms of tissue distribution, present in liver, intestine, kidney and beta-pancreatic islet cells.

Its subcellular location is the cell membrane. It catalyses the reaction D-glucose(out) = D-glucose(in). It carries out the reaction D-fructose(out) = D-fructose(in). The enzyme catalyses L-dehydroascorbate(out) = L-dehydroascorbate(in). The catalysed reaction is D-galactose(in) = D-galactose(out). Its activity is regulated as follows. D-glucose and maltose competitively inhibit fructose transport. D-glucose, D-fructose and maltose inhibit deoxyglucose transport. Functionally, facilitative hexose transporter that mediates the transport of glucose, fructose and galactose. Likely mediates the bidirectional transfer of glucose across the plasma membrane of hepatocytes and is responsible for uptake of glucose by the beta cells; may comprise part of the glucose-sensing mechanism of the beta cell. May also participate with the Na(+)/glucose cotransporter in the transcellular transport of glucose in the small intestine and kidney. Also able to mediate the transport of dehydroascorbate. This is Solute carrier family 2, facilitated glucose transporter member 2 from Rattus norvegicus (Rat).